The sequence spans 357 residues: Mating-type protein MAT-1 (357 aa).

The segment at residues 53–108 (RAKRPLNAFMAFRTYYLKLFPDTQQKNASGFLTQLWGGDPHRNKWALIAKVYSFLR) is a DNA-binding region (alpha box).

It belongs to the MATALPHA1 family.

The protein localises to the nucleus. In terms of biological role, mating type proteins are sequence specific DNA-binding proteins that act as master switches in fungal differentiation by controlling gene expression in a cell type-specific fashion. Transcriptional activator that induces the transcription of alpha-specific genes. This Fusarium oxysporum (Fusarium vascular wilt) protein is Mating-type protein MAT-1 (MAT1).